Consider the following 341-residue polypeptide: Uroporphyrinogen decarboxylase (341 aa).

Substrate-binding positions include 23 to 27 (RQAGR), aspartate 73, tyrosine 148, serine 203, and histidine 318.

The protein belongs to the uroporphyrinogen decarboxylase family. As to quaternary structure, homodimer.

The protein localises to the cytoplasm. The enzyme catalyses uroporphyrinogen III + 4 H(+) = coproporphyrinogen III + 4 CO2. It functions in the pathway porphyrin-containing compound metabolism; protoporphyrin-IX biosynthesis; coproporphyrinogen-III from 5-aminolevulinate: step 4/4. In terms of biological role, catalyzes the decarboxylation of four acetate groups of uroporphyrinogen-III to yield coproporphyrinogen-III. This chain is Uroporphyrinogen decarboxylase, found in Brucella suis (strain ATCC 23445 / NCTC 10510).